The sequence spans 132 residues: Small ribosomal subunit protein uS8 (132 aa).

The protein belongs to the universal ribosomal protein uS8 family. As to quaternary structure, part of the 30S ribosomal subunit. Contacts proteins S5 and S12.

In terms of biological role, one of the primary rRNA binding proteins, it binds directly to 16S rRNA central domain where it helps coordinate assembly of the platform of the 30S subunit. In Bartonella henselae (strain ATCC 49882 / DSM 28221 / CCUG 30454 / Houston 1) (Rochalimaea henselae), this protein is Small ribosomal subunit protein uS8.